A 910-amino-acid polypeptide reads, in one-letter code: Adhesion G-protein coupled receptor F1 (910 aa).

An N-terminal signal peptide occupies residues 1-19; it reads MKVGVLWLISFFTFTDGHG. Residues 20–583 are Extracellular-facing; the sequence is GFLGKNDGIK…SPFVPSTIFP (564 aa). N-linked (GlcNAc...) asparagine glycosylation is found at Asn-139, Asn-168, Asn-205, Asn-282, Asn-310, Asn-317, Asn-329, Asn-354, Asn-368, Asn-389, Asn-410, Asn-423, Asn-437, Asn-455, Asn-512, Asn-528, and Asn-553. The region spanning 148–256 is the SEA domain; the sequence is ERTKIWGTFK…GSFRVFGKAQ (109 aa). Disulfide bonds link Cys-257–Cys-287 and Cys-275–Cys-299. A GAIN-B domain is found at 437 to 579; that stretch reads NKSQLKRGYS…SILMSPFVPS (143 aa). 2 cysteine pairs are disulfide-bonded: Cys-534-Cys-561 and Cys-549-Cys-563. A GPS region spans residues 534–579; it reads CVFWDFSHLQWNDAGCHLVNETQDIVTCQCTHLTSFSILMSPFVPS. The stachel stretch occupies residues 568–576; sequence SFSILMSPF. Residues 584–609 traverse the membrane as a helical segment; that stretch reads VVKWITYVGLGISIGSLILCLIIEAL. The Cytoplasmic portion of the chain corresponds to 610 to 621; the sequence is FWKQIKKSQTSH. Residues 622-646 form a helical membrane-spanning segment; the sequence is TRRICMVNIALSLLIADVWFIVGAT. The Extracellular segment spans residues 647–658; it reads VDTTVNPSGVCT. The cysteines at positions 657 and 733 are disulfide-linked. The helical transmembrane segment at 659–684 threads the bilayer; it reads AAVFFTHFFYLSLFFWMLMLGILLAY. The Cytoplasmic portion of the chain corresponds to 685 to 696; it reads RIILVFHHMAQH. Residues 697–719 traverse the membrane as a helical segment; that stretch reads LMMAVGFCLGYGCPLIISVITIA. Residues 720 to 742 are Extracellular-facing; sequence VTQPSNTYKRKDVCWLNWSNGSK. N-linked (GlcNAc...) asparagine glycans are attached at residues Asn-736 and Asn-739. A helical transmembrane segment spans residues 743–767; sequence PLLAFVVPALAIVAVNFVVVLLVLT. Over 768–784 the chain is Cytoplasmic; that stretch reads KLWRPTVGERLSRDDKA. The chain crosses the membrane as a helical span at residues 785–813; the sequence is TIIRVGKSLLILTPLLGLTWGFGIGTIVD. Over 814-816 the chain is Extracellular; the sequence is SQN. Residues 817 to 842 form a helical membrane-spanning segment; that stretch reads LAWHVIFALLNAFQGFFILCFGILLD. The Cytoplasmic portion of the chain corresponds to 843 to 910; that stretch reads SKLRQLLFNK…IMLTQFVSNE (68 aa).

Belongs to the G-protein coupled receptor 2 family. Adhesion G-protein coupled receptor (ADGR) subfamily. As to quaternary structure, heterodimer of 2 chains generated by proteolytic processing; the large extracellular N-terminal fragment and the membrane-bound C-terminal fragment predominantly remain associated and non-covalently linked. Post-translationally, autoproteolytically processed at the GPS region of the GAIN-B domain; this cleavage modulates receptor activity. Glycosylated. Glycosylation at Asn-389 is required for secretion or folding. In terms of tissue distribution, mainly expressed in the kidney. Up-regulated in lung adenocarcinomas and prostate cancers.

It is found in the cell membrane. The protein localises to the secreted. Its activity is regulated as follows. Forms a heterodimer of 2 chains generated by proteolytic processing that remain associated through non-covalent interactions mediated by the GAIN-B domain. In the inactivated receptor, the Stachel sequence (also named stalk) is embedded in the GAIN-B domain, where it adopts a beta-strand conformation. On activation, the Stachel moves into the 7 transmembrane region and adopts a twisted hook-shaped configuration that forms contacts within the receptor, leading to coupling of a G-alpha protein, which activates signaling. The cleaved GAIN-B and N-terminal domains can then dissociate from the rest of the receptor. Functionally, adhesion G-protein coupled receptor (aGPCR) for N-docosahexaenoylethanolamine (synaptamide), an omega-3 fatty acid lipid highly enriched in the brain. Ligand binding causes a conformation change that triggers signaling via guanine nucleotide-binding proteins (G proteins) and modulates the activity of downstream effectors, such as adenylate cyclase. ADGRF1 is coupled to G(s) G proteins and mediates activation of adenylate cyclase activity. Also able to couple to G(q), G(i) and G(12)/G(13) G proteins; additional evidence is however required to confirm this result in vivo. Involved in the development of neurons and cognitive function. In liver, involved in fat accumulation. The chain is Adhesion G-protein coupled receptor F1 from Homo sapiens (Human).